The primary structure comprises 911 residues: FIGNL1-interacting regulator of recombination and mitosis (911 aa).

Positions 830–853 (SEKSQPAQTPLTEEPCAKRARQET) are disordered. Over residues 844-853 (PCAKRARQET) the composition is skewed to basic and acidic residues.

It localises to the chromosome. It is found in the centromere. Its subcellular location is the kinetochore. The protein localises to the nucleus. The protein resides in the midbody. It localises to the cytoplasm. It is found in the cytoskeleton. Its subcellular location is the spindle. Functionally, may play a role in chromosome segregation. In Danio rerio (Zebrafish), this protein is FIGNL1-interacting regulator of recombination and mitosis.